Reading from the N-terminus, the 108-residue chain is uncharacterized protein (108 aa).

The next 3 helical transmembrane spans lie at 36–56, 58–78, and 88–108; these read LAIM…DKMI, FIFV…KLLF, and IVFL…FFNL.

The protein localises to the cell membrane. This is an uncharacterized protein from Alkalihalophilus pseudofirmus (strain ATCC BAA-2126 / JCM 17055 / OF4) (Bacillus pseudofirmus).